Reading from the N-terminus, the 155-residue chain is Ribosome maturation factor RimP (155 aa).

It belongs to the RimP family.

It is found in the cytoplasm. Required for maturation of 30S ribosomal subunits. This Maridesulfovibrio salexigens (strain ATCC 14822 / DSM 2638 / NCIMB 8403 / VKM B-1763) (Desulfovibrio salexigens) protein is Ribosome maturation factor RimP.